The primary structure comprises 559 residues: DNA ligase (559 aa).

An ATP-binding site is contributed by E247. K249 serves as the catalytic N6-AMP-lysine intermediate. Residues R254, R269, E299, F339, R414, and K420 each coordinate ATP.

Belongs to the ATP-dependent DNA ligase family. It depends on Mg(2+) as a cofactor.

It catalyses the reaction ATP + (deoxyribonucleotide)n-3'-hydroxyl + 5'-phospho-(deoxyribonucleotide)m = (deoxyribonucleotide)n+m + AMP + diphosphate.. It carries out the reaction NAD(+) + (deoxyribonucleotide)n-3'-hydroxyl + 5'-phospho-(deoxyribonucleotide)m = (deoxyribonucleotide)n+m + AMP + beta-nicotinamide D-nucleotide.. DNA ligase that seals nicks in double-stranded DNA during DNA replication, DNA recombination and DNA repair. Shows high activity with either ATP or NAD(+). The chain is DNA ligase from Thermococcus fumicolans.